Here is a 226-residue protein sequence, read N- to C-terminus: UPF0173 metal-dependent hydrolase Msed_2125 (226 aa).

It belongs to the UPF0173 family.

The protein is UPF0173 metal-dependent hydrolase Msed_2125 of Metallosphaera sedula (strain ATCC 51363 / DSM 5348 / JCM 9185 / NBRC 15509 / TH2).